Here is a 232-residue protein sequence, read N- to C-terminus: Pyridoxal 5'-phosphate synthase subunit PdxS (232 aa).

K23 acts as the Schiff-base intermediate with D-ribose 5-phosphate in catalysis. G95 contributes to the D-ribose 5-phosphate binding site. R107 provides a ligand contact to D-glyceraldehyde 3-phosphate. Residues G156 and 177–178 (GS) contribute to the D-ribose 5-phosphate site.

Belongs to the PdxS/SNZ family. As to quaternary structure, in the presence of PdxT, forms a dodecamer of heterodimers.

The catalysed reaction is aldehydo-D-ribose 5-phosphate + D-glyceraldehyde 3-phosphate + L-glutamine = pyridoxal 5'-phosphate + L-glutamate + phosphate + 3 H2O + H(+). It functions in the pathway cofactor biosynthesis; pyridoxal 5'-phosphate biosynthesis. In terms of biological role, catalyzes the formation of pyridoxal 5'-phosphate from ribose 5-phosphate (RBP), glyceraldehyde 3-phosphate (G3P) and ammonia. The ammonia is provided by the PdxT subunit. Can also use ribulose 5-phosphate and dihydroxyacetone phosphate as substrates, resulting from enzyme-catalyzed isomerization of RBP and G3P, respectively. The polypeptide is Pyridoxal 5'-phosphate synthase subunit PdxS (Clostridium novyi).